The chain runs to 243 residues: Small ribosomal subunit protein uS3 (243 aa).

The KH type-2 domain occupies 39–110; the sequence is IRGFIQKKYA…QVRINVVEIE (72 aa). Residues 215-243 are disordered; the sequence is DQPLPVGASPRRKGSRRPQQFEDRSNDGK. Residues 233–243 are compositionally biased toward basic and acidic residues; sequence QQFEDRSNDGK.

The protein belongs to the universal ribosomal protein uS3 family. Part of the 30S ribosomal subunit. Forms a tight complex with proteins S10 and S14.

Binds the lower part of the 30S subunit head. Binds mRNA in the 70S ribosome, positioning it for translation. The polypeptide is Small ribosomal subunit protein uS3 (Prochlorococcus marinus (strain MIT 9211)).